Consider the following 485-residue polypeptide: Adenosylhomocysteinase (485 aa).

Substrate-binding residues include Thr-60, Asp-146, and Glu-208. 209-211 (TTT) provides a ligand contact to NAD(+). 2 residues coordinate substrate: Lys-238 and Asp-242. NAD(+)-binding positions include Asn-243, 272–277 (GYGDVG), Glu-295, Asn-330, 351–353 (IGH), and Asn-399.

The protein belongs to the adenosylhomocysteinase family. Requires NAD(+) as cofactor.

The protein resides in the cytoplasm. The catalysed reaction is S-adenosyl-L-homocysteine + H2O = L-homocysteine + adenosine. The protein operates within amino-acid biosynthesis; L-homocysteine biosynthesis; L-homocysteine from S-adenosyl-L-homocysteine: step 1/1. May play a key role in the regulation of the intracellular concentration of adenosylhomocysteine. This chain is Adenosylhomocysteinase, found in Streptomyces avermitilis (strain ATCC 31267 / DSM 46492 / JCM 5070 / NBRC 14893 / NCIMB 12804 / NRRL 8165 / MA-4680).